The sequence spans 332 residues: MSESIDINVYSQTTIPNAMAELMDNHNKMEQISAYCKSLYANGDAAQAYEQTQGYAKNALLNVAYHIQTVGTHITSLLQLQTNEMEKLNIEIQTLTQRVRMIHDSTGTNVFSNQDAAKPYKSSLKNRKVDTEATKAPVKYVHKPISYGISASDINQNGVPPPLNHSNSSANLTSSSGHLAASSTSNSSTPSYQSPSYSSQPTISSGTPPPIQKQPPRVGNAPPPPSLSVPAAPPPPVMNVPPPPPTSQRPSSVNNNAPSNDFPPPPPPSSSSSGGDLPPPPSFGLPPPPTLGDDFPPPPPPPVGSYDFPPPPARPQSQFYDHNDFPPPPPPM.

Residues 73 to 104 (HITSLLQLQTNEMEKLNIEIQTLTQRVRMIHD) are a coiled coil. Residues 152–332 (SDINQNGVPP…NDFPPPPPPM (181 aa)) form a disordered region. Positions 164–206 (NHSNSSANLTSSSGHLAASSTSNSSTPSYQSPSYSSQPTISSG) are enriched in low complexity. Residues 221–247 (APPPPSLSVPAAPPPPVMNVPPPPPTS) show a composition bias toward pro residues. The span at 248 to 257 (QRPSSVNNNA) shows a compositional bias: polar residues. Pro residues predominate over residues 277-314 (LPPPPSFGLPPPPTLGDDFPPPPPPPVGSYDFPPPPAR).

The protein belongs to the ABI family. As to quaternary structure, part of a Scar/WAVE complex containing brk1, scrA, abiA, pirA and napA. Interacts with scrA.

Its function is as follows. Involved in regulation of actin and microtubule organization. Required for proper cytokinesis. The polypeptide is Abl interactor homolog (abiA) (Dictyostelium discoideum (Social amoeba)).